A 506-amino-acid chain; its full sequence is CDK5 regulatory subunit-associated protein 3 (506 aa).

Short sequence motifs (shuffled ATG8-binding motif) lie at residues 267 to 270 (IDWG), 292 to 295 (IDWG), and 310 to 313 (IDWG). The tract at residues 269 to 506 (WGDFGVEAVS…RPVNLMGTSL (238 aa)) is required for interaction with UFL1 and mediates interaction with CHEK1. Residues 355-370 (DELMELEIFLAQRAVE) are RPL10a-binding domain (RBD). K450 is covalently cross-linked (Glycyl lysine isopeptide (Lys-Gly) (interchain with G-Cter in SUMO2)).

This sequence belongs to the CDK5RAP3 family. Substrate adapter component of the UFM1 ribosome E3 ligase (UREL) complex, composed of UFL1, DDRGK1 and CDK5RAP3. Interaction with UFL1 anchors CDK5RAP3 in the cytoplasm, preventing its translocation to the nucleus which allows expression of the CCND1 cyclin and progression of cells through the G1/S transition. Interacts with ATG8 family proteins MAP1LC3A, MAP1LC3B, GABARAP, GABARAPL1 and GABARAPL2. Interacts with CDK5R1; competes with CDK5RAP1 and CDK5RAP2. Interacts with RELA. Interacts with CHEK1; may negatively regulate CHEK1 and thereby stimulate entry into mitosis. Interacts with CDKN2A/ARF and MDM2; forms a ternary complex involved in regulation of p53/TP53. Interacts with MAPK14. Interacts with CCNB1. Interacts with TUBG1; may regulate CDK5RAP3 in mitotic G2/M transition checkpoint. In terms of assembly, (Microbial infection) Interacts with hepatitis B virus large envelope protein mutant pre-s2; promotes mitotic entry. Post-translationally, may be phosphorylated by CDK5. Ubiquitinated. Probably triggers proteasomal degradation and is negatively regulated by UFL1. In terms of processing, may be ufmylated. Post-translationally, cleaved by caspases early during apoptosis, the resulting peptides may play a role in rupture of the nuclear envelope. In terms of tissue distribution, ubiquitously expressed. Expressed in heart, brain, placenta, lung, liver, skeletal muscle, kidney and pancreas. Isoform 3 is expressed in kidney, liver, skeletal muscle and placenta.

Its subcellular location is the endoplasmic reticulum membrane. It localises to the cytoplasm. The protein localises to the nucleus. It is found in the cytoskeleton. The protein resides in the microtubule organizing center. Its subcellular location is the centrosome. In terms of biological role, substrate adapter of E3 ligase complexes mediating ufmylation, the covalent attachment of the ubiquitin-like modifier UFM1 to substrate proteins, and which is involved in various processes, such as ribosome recycling and reticulophagy (also called ER-phagy). As part of the UREL complex, plays a key role in ribosome recycling by promoting mono-ufmylation of RPL26/uL24 subunit of the 60S ribosome. Ufmylation of RPL26/uL24 occurs on free 60S ribosomes following ribosome dissociation: it weakens the junction between post-termination 60S subunits and SEC61 translocons, promoting release and recycling of the large ribosomal subunit from the endoplasmic reticulum membrane. Ufmylation of RPL26/uL24 and subsequent 60S ribosome recycling either take place after normal termination of translation or after ribosome stalling during cotranslational translocation at the endoplasmic reticulum. Within the UREL complex, CDK5RAP3 acts as a substrate adapter that constrains UFL1 ligase activity to mono-ufmylate RPL26/uL24 at 'Lys-134'. The UREL complex is also involved in reticulophagy in response to endoplasmic reticulum stress by promoting ufmylation of proteins such as CYB5R3, thereby promoting lysosomal degradation of ufmylated proteins. Also acts as a regulator of transcription: negatively regulates NF-kappa-B-mediated gene transcription through the control of RELA phosphorylation. Also regulates mitotic G2/M transition checkpoint and mitotic G2 DNA damage checkpoint. Through its interaction with CDKN2A/ARF and MDM2 may induce MDM2-dependent p53/TP53 ubiquitination, stabilization and activation in the nucleus, thereby promoting G1 cell cycle arrest and inhibition of cell proliferation. May also play a role in the rupture of the nuclear envelope during apoptosis. May regulate MAPK14 activity by regulating its dephosphorylation by PPM1D/WIP1. Required for liver development. (Microbial infection) May be negatively regulated by hepatitis B virus large envelope protein mutant pre-s2 to promote mitotic entry. In Homo sapiens (Human), this protein is CDK5 regulatory subunit-associated protein 3.